Here is a 293-residue protein sequence, read N- to C-terminus: Ribosomal RNA small subunit methyltransferase A (293 aa).

6 residues coordinate S-adenosyl-L-methionine: asparagine 36, leucine 38, glycine 63, glutamate 84, aspartate 111, and asparagine 132.

The protein belongs to the class I-like SAM-binding methyltransferase superfamily. rRNA adenine N(6)-methyltransferase family. RsmA subfamily.

Its subcellular location is the cytoplasm. It catalyses the reaction adenosine(1518)/adenosine(1519) in 16S rRNA + 4 S-adenosyl-L-methionine = N(6)-dimethyladenosine(1518)/N(6)-dimethyladenosine(1519) in 16S rRNA + 4 S-adenosyl-L-homocysteine + 4 H(+). Functionally, specifically dimethylates two adjacent adenosines (A1518 and A1519) in the loop of a conserved hairpin near the 3'-end of 16S rRNA in the 30S particle. May play a critical role in biogenesis of 30S subunits. The chain is Ribosomal RNA small subunit methyltransferase A from Treponema denticola (strain ATCC 35405 / DSM 14222 / CIP 103919 / JCM 8153 / KCTC 15104).